Here is a 491-residue protein sequence, read N- to C-terminus: HEPACAM family member 2 (491 aa).

The signal sequence occupies residues 1–18 (MWLRVFTAFLSFTAGACS). Asparagine 73, asparagine 117, and asparagine 153 each carry an N-linked (GlcNAc...) asparagine glycan. Ig-like C2-type domains follow at residues 137-221 (PVVQ…SDII) and 223-319 (PTIY…THFT). Disulfide bonds link cysteine 158-cysteine 207 and cysteine 258-cysteine 303. Asparagine 308 carries N-linked (GlcNAc...) asparagine glycosylation. Residues 340–360 (LASITGISLFLIISMCLLFLW) traverse the membrane as a helical segment. Over 361–491 (KKFQPYKVIK…GKHSRAKQCI (131 aa)) the chain is Cytoplasmic. The span at 444–454 (QQQDHPESSSQ) shows a compositional bias: polar residues. 2 disordered regions span residues 444 to 466 (QQQD…DRHD) and 472 to 491 (ELGH…KQCI). Residues 472–482 (ELGHCKEQDKG) show a composition bias toward basic and acidic residues.

Poly-ADP-ribosylated (PARsylated) by tankyrase TNKS during late G2 and prophase, leading to translocation to mitotic centrosomes. In terms of processing, N-glycosylated.

It is found in the golgi apparatus membrane. The protein localises to the cytoplasm. Its subcellular location is the cytoskeleton. It localises to the spindle. The protein resides in the microtubule organizing center. It is found in the centrosome. The protein localises to the midbody. In terms of biological role, required during prometaphase for centrosome maturation. Following poly-ADP-ribosylation (PARsylation) by TNKS, translocates from the Golgi apparatus to mitotic centrosomes and plays a key role in the formation of robust microtubules for prompt movement of chromosomes: anchors AKAP9/CG-NAP, a scaffold protein of the gamma-tubulin ring complex and promotes centrosome maturation. The chain is HEPACAM family member 2 (HEPACAM2) from Bos taurus (Bovine).